Here is a 932-residue protein sequence, read N- to C-terminus: von Willebrand factor A domain-containing protein DDB_G0292028 (932 aa).

The tract at residues 1–49 (MNFIKKVIGGGSSKSKTDIKIEDEQHEQQHEQQHEKQQIPDKISTSKVN) is disordered. The segment covering 15–39 (SKTDIKIEDEQHEQQHEQQHEKQQI) has biased composition (basic and acidic residues). The region spanning 95–222 (LTSPGLNTKV…DVTVNITITS (128 aa)) is the VIT domain. A VWFA domain is found at 342 to 521 (EFIFVLDCSG…IAMQPTLSNI (180 aa)). Disordered regions lie at residues 661-752 (QQIN…SQAQ) and 800-834 (TSQI…STSS). Residues 677 to 686 (TRVQGSSSVF) are compositionally biased toward polar residues. A compositionally biased stretch (low complexity) spans 815–834 (SSSPTIQKSSSLPSRPSTSS).

The chain is von Willebrand factor A domain-containing protein DDB_G0292028 from Dictyostelium discoideum (Social amoeba).